A 499-amino-acid polypeptide reads, in one-letter code: Probable cytosol aminopeptidase (499 aa).

Mn(2+) is bound by residues Lys-263 and Asp-268. Lys-275 is a catalytic residue. Positions 286, 345, and 347 each coordinate Mn(2+). Arg-349 is an active-site residue.

Belongs to the peptidase M17 family. Mn(2+) is required as a cofactor.

The protein resides in the cytoplasm. The enzyme catalyses Release of an N-terminal amino acid, Xaa-|-Yaa-, in which Xaa is preferably Leu, but may be other amino acids including Pro although not Arg or Lys, and Yaa may be Pro. Amino acid amides and methyl esters are also readily hydrolyzed, but rates on arylamides are exceedingly low.. It carries out the reaction Release of an N-terminal amino acid, preferentially leucine, but not glutamic or aspartic acids.. Presumably involved in the processing and regular turnover of intracellular proteins. Catalyzes the removal of unsubstituted N-terminal amino acids from various peptides. This chain is Probable cytosol aminopeptidase (pepA), found in Chlamydia muridarum (strain MoPn / Nigg).